A 323-amino-acid chain; its full sequence is MEFTFLGTSAGTPTRSRNVTGLALCLSGPKPWYLVDCGEGTQHQLMRTRYSVMQLRAMFITHIHGDHIFGLPGLLTSASMLGRTEPLDIIAPPQVRRFIDAVIENSDSSLSYPLNFINSEAPDFYWQDDHLGVTNVALSHRVPCRAYVFTERNLERQLQKEKLVADGIEPGPQWGDLQKGKDVLLDDGRLLRSNDYTHIPRTARKIIVGGDNDTPELLKDACQGTHVLIHEATYTQDVADRVGPWPQHSSAQQVARFAQATKLPNLVLTHFSSRYQSAPGGSPHINQLAAEALQHYKGQLFLARDFDTYRLEKDFQLHKVDHN.

H62, H64, D66, H67, H140, D211, and H270 together coordinate Zn(2+). The active-site Proton acceptor is the D66.

The protein belongs to the RNase Z family. Homodimer. Zn(2+) serves as cofactor.

The catalysed reaction is Endonucleolytic cleavage of RNA, removing extra 3' nucleotides from tRNA precursor, generating 3' termini of tRNAs. A 3'-hydroxy group is left at the tRNA terminus and a 5'-phosphoryl group is left at the trailer molecule.. Functionally, zinc phosphodiesterase, which displays some tRNA 3'-processing endonuclease activity. Probably involved in tRNA maturation, by removing a 3'-trailer from precursor tRNA. In Marinobacter nauticus (strain ATCC 700491 / DSM 11845 / VT8) (Marinobacter aquaeolei), this protein is Ribonuclease Z.